The following is a 436-amino-acid chain: MRISIFGLGYVGAVCAGCLSARGHEVIGVDVSSTKIDLINQGKSPIVEPGLEALLQQGRQTGRLSGTTDFKKAVLDSDVSFICVGTPSKKNGDLDLGYIETVCREIGFAIREKSERHTVVVRSTVLPGTVNNVVIPLIEDCSGKKAGVDFGVGTNPEFLRESTAIKDYDFPPMTVIGELDKQTGDLLEEIYRELDAPIIRKTVEVAEMIKYTCNVWHAAKVTFANEIGNIAKAVGVDGREVMDVICQDHKLNLSRYYMRPGFAFGGSCLPKDVRALTYRASQLDVEHPMLGSLMRSNSNQVQKAFDLITSHDTRKVGLLGLSFKAGTDDLRESPLVELAEMLIGKGYELRIFDRNVEYARVHGANKEYIESKIPHVSSLLVSDLDEVVASSDVLVLGNGDELFVDLVNKTPSGKKLVDLVGFMPHTTTAQAEGICW.

Positions 10, 11, 30, 35, 86, and 124 each coordinate NAD(+). Glu-161, Lys-210, Asn-214, His-217, Asn-225, Tyr-256, Tyr-257, Arg-259, Phe-262, and Gly-265 together coordinate GDP-alpha-D-mannuronate. Cys-268 serves as the catalytic Nucleophile. Residue Lys-271 coordinates NAD(+). The inter-domain linker stretch occupies residues Tyr-278 to Arg-295. Residue Lys-324 coordinates GDP-alpha-D-mannuronate. Arg-331 contributes to the NAD(+) binding site.

This sequence belongs to the UDP-glucose/GDP-mannose dehydrogenase family. In terms of assembly, forms a domain-swapped dimer with each peptide contributing to each active site. The dimers assemble further. X-ray structures indicate this enzyme exists as a homotetramer PubMed:12705829, but kinetic and physical results obtained in PubMed:2470755 and PubMed:12135385 indicate that it is probably a homohexamer.

The enzyme catalyses GDP-alpha-D-mannose + 2 NAD(+) + H2O = GDP-alpha-D-mannuronate + 2 NADH + 3 H(+). It participates in glycan biosynthesis; alginate biosynthesis. Its activity is regulated as follows. Inhibited by GMP, ATP, GDP-D-glucose and maltose. Inhibited by GMP and deamidoNAD. Functionally, catalyzes the oxidation of guanosine diphospho-D-mannose (GDP-D-mannose) to GDP-D-mannuronic acid, a precursor for alginate polymerization. The alginate layer causes a mucoid phenotype and provides a protective barrier against host immune defenses and antibiotics. Other sugars are not used as substrates. The sequence is that of GDP-mannose 6-dehydrogenase from Pseudomonas aeruginosa (strain ATCC 15692 / DSM 22644 / CIP 104116 / JCM 14847 / LMG 12228 / 1C / PRS 101 / PAO1).